The primary structure comprises 281 residues: Small ribosomal subunit protein uS2 (281 aa).

The protein belongs to the universal ribosomal protein uS2 family.

The protein is Small ribosomal subunit protein uS2 (rpsB) of Chlamydia muridarum (strain MoPn / Nigg).